Reading from the N-terminus, the 114-residue chain is Transmembrane protein 256 homolog (114 aa).

The N-terminal stretch at 1 to 25 (MAAGRVWGRLGAVSGALAVTAGAYG) is a signal peptide. Residues 26-64 (AHGFRRSDRDEYLKELFETGNRYHFLHSLALLAVPHCRR) are Extracellular-facing. The chain crosses the membrane as a helical span at residues 65-85 (PLLAGSLLTSGIVLFSGTFYY). Topologically, residues 86–93 (QALSGDPT) are cytoplasmic. The helical transmembrane segment at 94–114 (LTKAAPYGGTLLILGWAAMAL) threads the bilayer.

It belongs to the TMEM256 family.

It is found in the cell membrane. The protein is Transmembrane protein 256 homolog of Bufo gargarizans (Asian toad).